The following is a 512-amino-acid chain: MTQFITHKWLAALGLASSIAAFPALAAKDVVVAVGSNFTTLDPYDANDTLSQAVAKSFYQGLFGLDKDMKVKNVLAEGYTVSDDGLTYTITLRQGVKFQDGADFNAAAVKANLDRASNPDNHLKRYNLYKNIAKTEVVDPATVKITLKQPFSAFINILAHPATAMISPQALEKYGKDIGFHPVGTGPYQLETWNQTDFVKVKKFAGYWQQGLPKLDSITWRPVTDNNTRAAMLQTGEAQFAFPIPYEQAALLAKNKNLELVASPSIMQRYISMNVTQKPFDNPKVREALNYAINRQALVKVAFAGYATPATGVVPPSIAYAQSYQPWPYDPAKARELLKEAGYPDGFSTTLWSSHNHSTAQKVLQFTQQQLAQIGVKARITAMDAGQRAAEVEGKGQKESGVRMFYTGWSASTGEADWALSPLFASQNWPPTQFNTAFYSNKQVDSDLAAALKTNDPQEKTRLYKEAQDIIWKESPWIPLVVEKLVSAHSKNLTGFWIMPDTGFSFDDADLK.

The N-terminal stretch at 1 to 26 (MTQFITHKWLAALGLASSIAAFPALA) is a signal peptide.

The protein belongs to the bacterial solute-binding protein 5 family. The complex is composed of two ATP-binding proteins (GsiA), two transmembrane proteins (GsiC and GsiD) and a solute-binding protein (GsiB).

It is found in the periplasm. Part of the ABC transporter complex GsiABCD involved in glutathione import. Binds glutathione. This Salmonella typhimurium (strain LT2 / SGSC1412 / ATCC 700720) protein is Glutathione-binding protein GsiB.